Here is a 643-residue protein sequence, read N- to C-terminus: Threonine--tRNA ligase (643 aa).

Residues Met-1 to Thr-61 form the TGS domain. The interval Asp-243–Pro-534 is catalytic. The Zn(2+) site is built by Cys-334, His-385, and His-511.

It belongs to the class-II aminoacyl-tRNA synthetase family. Homodimer. Zn(2+) serves as cofactor.

It is found in the cytoplasm. The enzyme catalyses tRNA(Thr) + L-threonine + ATP = L-threonyl-tRNA(Thr) + AMP + diphosphate + H(+). Catalyzes the attachment of threonine to tRNA(Thr) in a two-step reaction: L-threonine is first activated by ATP to form Thr-AMP and then transferred to the acceptor end of tRNA(Thr). Also edits incorrectly charged L-seryl-tRNA(Thr). This chain is Threonine--tRNA ligase, found in Glaesserella parasuis serovar 5 (strain SH0165) (Haemophilus parasuis).